The chain runs to 41 residues: Histone H3.2 (41 aa).

The segment at 1-41 (MARAKQTARKSTGAEAPRKQLASKAARKSAPATGGIKKPHR) is disordered.

The protein belongs to the histone H3 family. The nucleosome is a histone octamer containing two molecules each of H2A, H2B, H3 and H4 assembled in one H3-H4 heterotetramer and two H2A-H2B heterodimers. The octamer wraps approximately 147 bp of DNA.

It is found in the nucleus. The protein resides in the chromosome. In terms of biological role, core component of nucleosome. Nucleosomes wrap and compact DNA into chromatin, limiting DNA accessibility to the cellular machineries which require DNA as a template. Histones thereby play a central role in transcription regulation, DNA repair, DNA replication and chromosomal stability. DNA accessibility is regulated via a complex set of post-translational modifications of histones, also called histone code, and nucleosome remodeling. This chain is Histone H3.2, found in Tetrahymena borealis.